The sequence spans 466 residues: Glutamate--tRNA ligase (466 aa).

The 'HIGH' region motif lies at 10–20 (PSPTGYLHVGG). Residues Cys99, Cys101, Cys126, and Asp128 each contribute to the Zn(2+) site. The 'KMSKS' region signature appears at 237-241 (RLSKR). ATP is bound at residue Lys240.

This sequence belongs to the class-I aminoacyl-tRNA synthetase family. Glutamate--tRNA ligase type 1 subfamily. As to quaternary structure, monomer. Zn(2+) is required as a cofactor.

The protein localises to the cytoplasm. The catalysed reaction is tRNA(Glu) + L-glutamate + ATP = L-glutamyl-tRNA(Glu) + AMP + diphosphate. In terms of biological role, catalyzes the attachment of glutamate to tRNA(Glu) in a two-step reaction: glutamate is first activated by ATP to form Glu-AMP and then transferred to the acceptor end of tRNA(Glu). In Geobacter sulfurreducens (strain ATCC 51573 / DSM 12127 / PCA), this protein is Glutamate--tRNA ligase.